The primary structure comprises 78 residues: Acyl carrier protein (78 aa).

A Carrier domain is found at 2 to 77; it reads SSIEERVKKI…LAINYINENL (76 aa). Ser-37 carries the post-translational modification O-(pantetheine 4'-phosphoryl)serine.

This sequence belongs to the acyl carrier protein (ACP) family. In terms of processing, 4'-phosphopantetheine is transferred from CoA to a specific serine of apo-ACP by AcpS. This modification is essential for activity because fatty acids are bound in thioester linkage to the sulfhydryl of the prosthetic group.

The protein localises to the cytoplasm. The protein operates within lipid metabolism; fatty acid biosynthesis. Its function is as follows. Carrier of the growing fatty acid chain in fatty acid biosynthesis. This is Acyl carrier protein from Saccharophagus degradans (strain 2-40 / ATCC 43961 / DSM 17024).